A 206-amino-acid chain; its full sequence is Probable GTP-binding protein EngB (206 aa).

The region spanning glutamine 23 to tyrosine 197 is the EngB-type G domain. GTP contacts are provided by residues glycine 31–serine 38, glycine 58–leucine 62, aspartate 76–glycine 79, threonine 143–aspartate 146, and phenylalanine 176–serine 178. Serine 38 and threonine 60 together coordinate Mg(2+).

The protein belongs to the TRAFAC class TrmE-Era-EngA-EngB-Septin-like GTPase superfamily. EngB GTPase family. The cofactor is Mg(2+).

Necessary for normal cell division and for the maintenance of normal septation. The sequence is that of Probable GTP-binding protein EngB from Pseudoalteromonas atlantica (strain T6c / ATCC BAA-1087).